A 434-amino-acid polypeptide reads, in one-letter code: Gamma-enolase (434 aa).

His-158 and Glu-167 together coordinate substrate. The active-site Proton donor is the Glu-210. Asp-245, Glu-293, and Asp-318 together coordinate Mg(2+). Residues Glu-293 and Asp-318 each coordinate substrate. The active-site Proton acceptor is Lys-343. Residues 370–373 (SHRS) and Lys-394 each bind substrate.

It belongs to the enolase family. In terms of assembly, homodimer. It depends on Mg(2+) as a cofactor. Expressed in the brain and, to much less but significant extents, in the pituitary and adrenal glands.

The protein resides in the cytoplasm. It carries out the reaction (2R)-2-phosphoglycerate = phosphoenolpyruvate + H2O. It functions in the pathway carbohydrate degradation; glycolysis; pyruvate from D-glyceraldehyde 3-phosphate: step 4/5. In Gallus gallus (Chicken), this protein is Gamma-enolase (ENO2).